Reading from the N-terminus, the 981-residue chain is Rab3 GTPase-activating protein catalytic subunit (981 aa).

Residues Ser83, Ser379, Ser536, Ser579, Ser581, and Ser590 each carry the phosphoserine modification. The tract at residues 532 to 558 (GKKTSLSDSTTSAYPGDAGKTGGQLGL) is disordered. The segment at 591–614 (DTEDLKGNGQESGKKGGPKEMANL) is disordered. A Phosphoserine modification is found at Ser664.

The protein belongs to the Rab3-GAP catalytic subunit family. In terms of assembly, the Rab3 GTPase-activating complex is a heterodimer composed of Rab3gap1 and Rab3gap2. The Rab3 GTPase-activating complex interacts with DMXL2. Interacts with LMAN1. In terms of tissue distribution, in the eye, it is highly expressed within the lens, particularly in the anterior lens epithelium and in a ring corresponding to the equatorial region where anterior cells are differentiating into lens fibers. Also highly expressed in the retina.

It is found in the cytoplasm. The protein resides in the endoplasmic reticulum. It localises to the golgi apparatus. The protein localises to the cis-Golgi network. Catalytic subunit of the Rab3 GTPase-activating (Rab3GAP) complex composed of RAB3GAP1 and RAB3GAP2, which has GTPase-activating protein (GAP) activity towards various Rab3 subfamily members (RAB3A, RAB3B, RAB3C and RAB3D), RAB5A and RAB43, and guanine nucleotide exchange factor (GEF) activity towards RAB18. As part of the Rab3GAP complex, acts as a GAP for Rab3 proteins by converting active RAB3-GTP to the inactive form RAB3-GDP. Rab3 proteins are involved in regulated exocytosis of neurotransmitters and hormones. The Rab3GAP complex, acts as a GEF for RAB18 by promoting the conversion of inactive RAB18-GDP to the active form RAB18-GTP. Recruits and stabilizes RAB18 at the cis-Golgi membrane where RAB18 is most likely activated. Also involved in RAB18 recruitment at the endoplasmic reticulum (ER) membrane where it maintains proper ER structure. Required for normal eye and brain development. May participate in neurodevelopmental processes such as proliferation, migration and differentiation before synapse formation, and non-synaptic vesicular release of neurotransmitters. The polypeptide is Rab3 GTPase-activating protein catalytic subunit (Mus musculus (Mouse)).